We begin with the raw amino-acid sequence, 262 residues long: Phosphonates import ATP-binding protein PhnC (262 aa).

An ABC transporter domain is found at 5 to 253 (ICVEQLSKTF…RFDHLYRSIN (249 aa)). 37-44 (GPSGSGKS) is a binding site for ATP.

This sequence belongs to the ABC transporter superfamily. Phosphonates importer (TC 3.A.1.9.1) family. The complex is composed of two ATP-binding proteins (PhnC), two transmembrane proteins (PhnE) and a solute-binding protein (PhnD).

It is found in the cell inner membrane. The enzyme catalyses phosphonate(out) + ATP + H2O = phosphonate(in) + ADP + phosphate + H(+). Functionally, part of the ABC transporter complex PhnCDE involved in phosphonates import. Responsible for energy coupling to the transport system. This Escherichia coli O157:H7 protein is Phosphonates import ATP-binding protein PhnC.